A 238-amino-acid polypeptide reads, in one-letter code: ATP-dependent Clp protease proteolytic subunit 4 (238 aa).

Catalysis depends on S113, which acts as the Nucleophile. H138 is a catalytic residue.

Belongs to the peptidase S14 family. In terms of assembly, fourteen ClpP subunits assemble into 2 heptameric rings which stack back to back to give a disk-like structure with a central cavity, resembling the structure of eukaryotic proteasomes.

Its subcellular location is the cytoplasm. It carries out the reaction Hydrolysis of proteins to small peptides in the presence of ATP and magnesium. alpha-casein is the usual test substrate. In the absence of ATP, only oligopeptides shorter than five residues are hydrolyzed (such as succinyl-Leu-Tyr-|-NHMec, and Leu-Tyr-Leu-|-Tyr-Trp, in which cleavage of the -Tyr-|-Leu- and -Tyr-|-Trp bonds also occurs).. In terms of biological role, cleaves peptides in various proteins in a process that requires ATP hydrolysis. Has a chymotrypsin-like activity. Plays a major role in the degradation of misfolded proteins. In Frankia casuarinae (strain DSM 45818 / CECT 9043 / HFP020203 / CcI3), this protein is ATP-dependent Clp protease proteolytic subunit 4.